Reading from the N-terminus, the 257-residue chain is Protein Cmaq_1209 (257 aa).

It belongs to the CinA family.

This chain is Protein Cmaq_1209, found in Caldivirga maquilingensis (strain ATCC 700844 / DSM 13496 / JCM 10307 / IC-167).